The sequence spans 51 residues: Large ribosomal subunit protein bL33 (51 aa).

Residues 1–20 (MRDKIRLNSSAGTGHFYTTD) form a disordered region.

It belongs to the bacterial ribosomal protein bL33 family.

The protein is Large ribosomal subunit protein bL33 of Psychromonas ingrahamii (strain DSM 17664 / CCUG 51855 / 37).